A 122-amino-acid chain; its full sequence is Large ribosomal subunit protein uL14c (122 aa).

The protein belongs to the universal ribosomal protein uL14 family. In terms of assembly, part of the 50S ribosomal subunit.

The protein resides in the plastid. It localises to the chloroplast. Functionally, binds to 23S rRNA. The sequence is that of Large ribosomal subunit protein uL14c from Chlorella vulgaris (Green alga).